A 163-amino-acid chain; its full sequence is MTEQASNGAAQDGQNAQFSLQRIYVRDLSFEAPKAPEIFRQDWKPSVQLDLNTRQKALDGGDFYEVVLSLSVTVKTGEEVAFIAEVQQAGIFLIKGLDAEAMGHTLGAFCPSLLFPYAREALDNLVVRGSFPALMLAPVNFDVLYAQELARMQAEGQASGTVQ.

Belongs to the SecB family. In terms of assembly, homotetramer, a dimer of dimers. One homotetramer interacts with 1 SecA dimer.

Its subcellular location is the cytoplasm. In terms of biological role, one of the proteins required for the normal export of preproteins out of the cell cytoplasm. It is a molecular chaperone that binds to a subset of precursor proteins, maintaining them in a translocation-competent state. It also specifically binds to its receptor SecA. The chain is Protein-export protein SecB from Azotobacter vinelandii (strain DJ / ATCC BAA-1303).